The sequence spans 406 residues: UPF0754 membrane protein CYB_2931 (406 aa).

2 helical membrane-spanning segments follow: residues 1 to 21 (MAFW…YFTN) and 385 to 405 (IVNL…LFLL).

It belongs to the UPF0754 family.

The protein resides in the cell inner membrane. The protein is UPF0754 membrane protein CYB_2931 of Synechococcus sp. (strain JA-2-3B'a(2-13)) (Cyanobacteria bacterium Yellowstone B-Prime).